Consider the following 483-residue polypeptide: Aspartyl/glutamyl-tRNA(Asn/Gln) amidotransferase subunit B (483 aa).

It belongs to the GatB/GatE family. GatB subfamily. In terms of assembly, heterotrimer of A, B and C subunits.

The catalysed reaction is L-glutamyl-tRNA(Gln) + L-glutamine + ATP + H2O = L-glutaminyl-tRNA(Gln) + L-glutamate + ADP + phosphate + H(+). It carries out the reaction L-aspartyl-tRNA(Asn) + L-glutamine + ATP + H2O = L-asparaginyl-tRNA(Asn) + L-glutamate + ADP + phosphate + 2 H(+). Its function is as follows. Allows the formation of correctly charged Asn-tRNA(Asn) or Gln-tRNA(Gln) through the transamidation of misacylated Asp-tRNA(Asn) or Glu-tRNA(Gln) in organisms which lack either or both of asparaginyl-tRNA or glutaminyl-tRNA synthetases. The reaction takes place in the presence of glutamine and ATP through an activated phospho-Asp-tRNA(Asn) or phospho-Glu-tRNA(Gln). The sequence is that of Aspartyl/glutamyl-tRNA(Asn/Gln) amidotransferase subunit B from Rickettsia felis (strain ATCC VR-1525 / URRWXCal2) (Rickettsia azadi).